Reading from the N-terminus, the 215-residue chain is Adenylate kinase (215 aa).

Position 10–15 (10–15 (GAGKGT)) interacts with ATP. An NMP region spans residues 30–59 (STGDMLRAAVKAGSPLGQQVKGVMDSGGLV). AMP is bound by residues Thr31, Arg36, 57-59 (GLV), 85-88 (GFPR), and Gln92. The segment at 122 to 159 (GRRVHPASGRVYHTEHNPPKVAGKDDVTGEDLIQREDD) is LID. ATP-binding positions include Arg123 and 132–133 (VY). AMP contacts are provided by Arg156 and Arg167. Gly201 is a binding site for ATP.

The protein belongs to the adenylate kinase family. In terms of assembly, monomer.

The protein localises to the cytoplasm. It carries out the reaction AMP + ATP = 2 ADP. The protein operates within purine metabolism; AMP biosynthesis via salvage pathway; AMP from ADP: step 1/1. Catalyzes the reversible transfer of the terminal phosphate group between ATP and AMP. Plays an important role in cellular energy homeostasis and in adenine nucleotide metabolism. The polypeptide is Adenylate kinase (Pseudomonas paraeruginosa (strain DSM 24068 / PA7) (Pseudomonas aeruginosa (strain PA7))).